The primary structure comprises 311 residues: N-acetylmuramic acid 6-phosphate etherase (311 aa).

Residues 66-229 (VADRMARGGR…STITMIRLGK (164 aa)) enclose the SIS domain. The Proton donor role is filled by Glu-94. The active site involves Glu-125.

The protein belongs to the GCKR-like family. MurNAc-6-P etherase subfamily. As to quaternary structure, homodimer.

The enzyme catalyses N-acetyl-D-muramate 6-phosphate + H2O = N-acetyl-D-glucosamine 6-phosphate + (R)-lactate. Its pathway is amino-sugar metabolism; N-acetylmuramate degradation. Its function is as follows. Specifically catalyzes the cleavage of the D-lactyl ether substituent of MurNAc 6-phosphate, producing GlcNAc 6-phosphate and D-lactate. The protein is N-acetylmuramic acid 6-phosphate etherase of Streptomyces avermitilis (strain ATCC 31267 / DSM 46492 / JCM 5070 / NBRC 14893 / NCIMB 12804 / NRRL 8165 / MA-4680).